Here is a 94-residue protein sequence, read N- to C-terminus: Ribonuclease VapC3 (94 aa).

Residue Asp6 coordinates Mg(2+).

Belongs to the PINc/VapC protein family. The cofactor is Mg(2+).

In terms of biological role, toxic component of a type II toxin-antitoxin (TA) system. An RNase. Its cognate antitoxin is VapB3. The sequence is that of Ribonuclease VapC3 (vapC3) from Methanocaldococcus jannaschii (strain ATCC 43067 / DSM 2661 / JAL-1 / JCM 10045 / NBRC 100440) (Methanococcus jannaschii).